The sequence spans 195 residues: Recombination protein RecR (195 aa).

The C4-type zinc-finger motif lies at 53 to 68; sequence CPVCFNIDVKSPCSIC. In terms of domain architecture, Toprim spans 76–171; that stretch reads QLLCIVEELG…KVTRLACGIP (96 aa).

It belongs to the RecR family.

In terms of biological role, may play a role in DNA repair. It seems to be involved in an RecBC-independent recombinational process of DNA repair. It may act with RecF and RecO. In Ehrlichia chaffeensis (strain ATCC CRL-10679 / Arkansas), this protein is Recombination protein RecR.